The sequence spans 222 residues: Pyridoxine/pyridoxamine 5'-phosphate oxidase (222 aa).

FMN-binding positions include 69–74 (RMVLLK), 84–85 (YT), Lys-91, and Gln-113. Residue Lys-74 participates in substrate binding. The substrate site is built by Tyr-131, Arg-135, and Ser-139. FMN contacts are provided by residues 148-149 (QS) and Trp-193. Position 199 to 201 (199 to 201 (RLH)) interacts with substrate. Residue Arg-203 coordinates FMN.

Belongs to the pyridoxamine 5'-phosphate oxidase family. In terms of assembly, homodimer. FMN is required as a cofactor.

The catalysed reaction is pyridoxamine 5'-phosphate + O2 + H2O = pyridoxal 5'-phosphate + H2O2 + NH4(+). It carries out the reaction pyridoxine 5'-phosphate + O2 = pyridoxal 5'-phosphate + H2O2. It participates in cofactor metabolism; pyridoxal 5'-phosphate salvage; pyridoxal 5'-phosphate from pyridoxamine 5'-phosphate: step 1/1. Its pathway is cofactor metabolism; pyridoxal 5'-phosphate salvage; pyridoxal 5'-phosphate from pyridoxine 5'-phosphate: step 1/1. Its function is as follows. Catalyzes the oxidation of either pyridoxine 5'-phosphate (PNP) or pyridoxamine 5'-phosphate (PMP) into pyridoxal 5'-phosphate (PLP). The polypeptide is Pyridoxine/pyridoxamine 5'-phosphate oxidase (Maricaulis maris (strain MCS10) (Caulobacter maris)).